A 294-amino-acid polypeptide reads, in one-letter code: tRNA dimethylallyltransferase (294 aa).

10–17 (GPTAVGKT) is an ATP binding site. 12–17 (TAVGKT) contributes to the substrate binding site. The tract at residues 35–38 (DSQQ) is interaction with substrate tRNA.

This sequence belongs to the IPP transferase family. In terms of assembly, monomer. Requires Mg(2+) as cofactor.

It carries out the reaction adenosine(37) in tRNA + dimethylallyl diphosphate = N(6)-dimethylallyladenosine(37) in tRNA + diphosphate. In terms of biological role, catalyzes the transfer of a dimethylallyl group onto the adenine at position 37 in tRNAs that read codons beginning with uridine, leading to the formation of N6-(dimethylallyl)adenosine (i(6)A). This chain is tRNA dimethylallyltransferase, found in Streptococcus pneumoniae (strain Hungary19A-6).